The following is a 366-amino-acid chain: 3-dehydroquinate synthase (366 aa).

Residues 73-78, 107-111, 131-132, Lys-144, and Lys-153 contribute to the NAD(+) site; these read DGERAK, GVVGD, and TT. Positions 186, 249, and 266 each coordinate Zn(2+).

This sequence belongs to the sugar phosphate cyclases superfamily. Dehydroquinate synthase family. Co(2+) is required as a cofactor. Requires Zn(2+) as cofactor. NAD(+) serves as cofactor.

It is found in the cytoplasm. It carries out the reaction 7-phospho-2-dehydro-3-deoxy-D-arabino-heptonate = 3-dehydroquinate + phosphate. The protein operates within metabolic intermediate biosynthesis; chorismate biosynthesis; chorismate from D-erythrose 4-phosphate and phosphoenolpyruvate: step 2/7. In terms of biological role, catalyzes the conversion of 3-deoxy-D-arabino-heptulosonate 7-phosphate (DAHP) to dehydroquinate (DHQ). The sequence is that of 3-dehydroquinate synthase from Koribacter versatilis (strain Ellin345).